The primary structure comprises 488 residues: Teichuronic acid biosynthesis protein TuaE (488 aa).

Transmembrane regions (helical) follow at residues 7-29, 35-57, 64-86, 91-110, 122-144, 154-173, 180-202, 222-244, 257-274, 279-298, 303-322, 354-376, 397-419, and 459-476; these read AVHTLALLAAAIFGVVLLLGAIH, MQMAAVLAVLAIGLFLLTLATAF, FMAVIYILIACTFLNNAFFAIHL, LFLYRLLLIAAGCLHIFGMV, LQVKGILLFFAFWFIYGLVSLLW, YLALLAMGIFFIYLIVMYVQ, IVYAIWLVMTVFLMIIGFYNHIT, PTSVFFNQNDFATFLSISFFFYI, AIGLVLSLCALYLIFATG, LLGIFAGIAVYIFIVLPPVL, IWLSAAGIALFAVLFASKIY, NAWHFFLDSYGFGVGAGNVSYYL, ILANFGLFIMLGYLSVYAYLIWV, and LFFHWVFMALVIAAVNVL.

Its subcellular location is the cell membrane. It participates in cell wall biogenesis; teichuronic acid biosynthesis. In terms of biological role, might be involved in the polymerization of teichuronic acid repeating units after their translocation to the outer surface of the membrane. This is Teichuronic acid biosynthesis protein TuaE (tuaE) from Bacillus subtilis (strain 168).